Reading from the N-terminus, the 150-residue chain is Ribosomal RNA large subunit methyltransferase H (150 aa).

Residues A100 and L118–F123 each bind S-adenosyl-L-methionine.

This sequence belongs to the RNA methyltransferase RlmH family. As to quaternary structure, homodimer.

It is found in the cytoplasm. It carries out the reaction pseudouridine(1915) in 23S rRNA + S-adenosyl-L-methionine = N(3)-methylpseudouridine(1915) in 23S rRNA + S-adenosyl-L-homocysteine + H(+). In terms of biological role, specifically methylates the pseudouridine at position 1915 (m3Psi1915) in 23S rRNA. This Helicobacter pylori (strain P12) protein is Ribosomal RNA large subunit methyltransferase H.